Reading from the N-terminus, the 249-residue chain is Electron transfer flavoprotein subunit beta (249 aa).

This sequence belongs to the ETF beta-subunit/FixA family. Heterodimer of an alpha and a beta subunit. Requires FAD as cofactor. AMP serves as cofactor.

Its function is as follows. The electron transfer flavoprotein serves as a specific electron acceptor for other dehydrogenases. It transfers the electrons to the main respiratory chain via ETF-ubiquinone oxidoreductase (ETF dehydrogenase). In Pseudomonas aeruginosa (strain ATCC 15692 / DSM 22644 / CIP 104116 / JCM 14847 / LMG 12228 / 1C / PRS 101 / PAO1), this protein is Electron transfer flavoprotein subunit beta (etfB).